The following is a 322-amino-acid chain: 3-alpha-hydroxysteroid dehydrogenase (322 aa).

The residue at position 1 (M1) is a Blocked amino end (Met). Residues 20–24 and D50 contribute to the NADP(+) site; that span reads GFGTT. Residue Y55 is the Proton donor of the active site. Residue H117 participates in substrate binding. NADP(+) is bound by residues 166 to 167, Q190, and 216 to 221; these read SN and YCTLGS. W227 is a substrate binding site. An NADP(+)-binding site is contributed by 270 to 280; that stretch reads RSFNAKRIKEL.

The protein belongs to the aldo/keto reductase family. As to quaternary structure, monomer. In terms of tissue distribution, in brain, highest levels found in olfactory bulb. Moderate levels present in cerebellum, cerebral cortex, hypothalamus and pituitary. Low levels present in amygdala, brain stem, caudate putamen, cingulate cortex, hippocampus, midbrain, and thalamus.

The protein resides in the cytoplasm. The enzyme catalyses a 3alpha-hydroxysteroid + NADP(+) = a 3-oxosteroid + NADPH + H(+). It catalyses the reaction a 3alpha-hydroxysteroid + NAD(+) = a 3-oxosteroid + NADH + H(+). Its activity is regulated as follows. Potently inhibited by the nonsteroidal anti-inflammatory drugs (NSAID). Its function is as follows. Besides being a 3-alpha-hydroxysteroid dehydrogenase, the enzyme can accomplish diverse functions: as quinone reductase, as an aromatic alcohol dehydrogenase, as dihydrodiol dehydrogenase, and as 9-, 11-, and 15-hydroxyprostaglandin dehydrogenase. In Rattus norvegicus (Rat), this protein is 3-alpha-hydroxysteroid dehydrogenase (Akr1c9).